A 116-amino-acid polypeptide reads, in one-letter code: Urease subunit beta (116 aa).

Residues 97 to 116 form a disordered region; the sequence is IQGPLDAGTAETAPGLPQQP.

This sequence belongs to the urease beta subunit family. As to quaternary structure, heterotrimer of UreA (gamma), UreB (beta) and UreC (alpha) subunits. Three heterotrimers associate to form the active enzyme.

The protein resides in the cytoplasm. It carries out the reaction urea + 2 H2O + H(+) = hydrogencarbonate + 2 NH4(+). The protein operates within nitrogen metabolism; urea degradation; CO(2) and NH(3) from urea (urease route): step 1/1. This chain is Urease subunit beta, found in Paracidovorax citrulli (strain AAC00-1) (Acidovorax citrulli).